A 524-amino-acid polypeptide reads, in one-letter code: Probable inorganic phosphate transporter 1-2 (524 aa).

Over 1–24 (MAEQQLGVLKALDVAKTQLYHFTA) the chain is Cytoplasmic. A helical membrane pass occupies residues 25–45 (IVIAGMGFFTDAYDLFCVSLV). The Extracellular portion of the chain corresponds to 46–70 (TKLLGRIYYFNPESAKPGSLPPHVA). A helical membrane pass occupies residues 71-91 (AAVNGVALCGTLSGQLFFGWL). At 92 to 99 (GDKLGRKK) the chain is on the cytoplasmic side. Residues 100–120 (VYGLTLIMMILCSVASGLSFG) traverse the membrane as a helical segment. The Extracellular portion of the chain corresponds to 121-131 (NEAKGVMTTLC). Residues 132-152 (FFRFWLGFGIGGDYPLSATIM) traverse the membrane as a helical segment. The Cytoplasmic segment spans residues 153–161 (SEYANKKTR). A helical transmembrane segment spans residues 162-182 (GAFIAAVFAMQGVGILAGGFV). At 183–211 (ALAVSSIFDKKFPAPTYAVNRALSTPPQV) the chain is on the extracellular side. A helical transmembrane segment spans residues 212-232 (DYIWRIIVMFGALPAALTYYW). Topologically, residues 233 to 292 (RMKMPETARYTALVAKNIKQATADMSKVLQTDIELEERVEDDVKDPRQNYGLFSKEFLRR) are cytoplasmic. A helical transmembrane segment spans residues 293–313 (HGLHLLGTTSTWFLLDIAFYS). Topologically, residues 314 to 348 (QNLFQKDIFSAIGWIPKAATMNATHEVFRIARAQT) are extracellular. The helical transmembrane segment at 349 to 369 (LIALCSTVPGYWFTVAFIDTI) threads the bilayer. Residues 370–371 (GR) are Cytoplasmic-facing. A helical transmembrane segment spans residues 372–392 (FKIQLNGFFMMTVFMFAIAFP). The Extracellular segment spans residues 393 to 402 (YNHWIKPENR). Residues 403–423 (IGFVVMYSLTFFFANFGPNAT) form a helical membrane-spanning segment. At 424-441 (TFIVPAEIFPARLRSTCH) the chain is on the cytoplasmic side. A helical membrane pass occupies residues 442-462 (GISAAAGKAGAIIGAFGFLYA). At 463-484 (AQNQDKAKVDAGYPPGIGVKNS) the chain is on the extracellular side. The chain crosses the membrane as a helical span at residues 485–505 (LIVLGVLNFIGMLFTFLVPEP). Residues 506-524 (KGKSLEELSGEAEVSHDEK) are Cytoplasmic-facing.

Belongs to the major facilitator superfamily. Phosphate:H(+) symporter (TC 2.A.1.9) family. In terms of tissue distribution, root specific, especially in trichoblasts. In mature plants, localized in root cortical cells and young lateral roots.

The protein resides in the membrane. Its function is as follows. High-affinity transporter for external inorganic phosphate. This Arabidopsis thaliana (Mouse-ear cress) protein is Probable inorganic phosphate transporter 1-2 (PHT1-2).